A 338-amino-acid chain; its full sequence is MRVLGIETSCDETGIAVYDDELGLLSHTLYSQVKLHADYGGVVPELASRDHVRKIVPLIRQALKDANTEMADLDGIAYTKGPGLIGALLVGACVGRSLAFAWDKPAIGVHHMEGHLLAPMLEDDAPEFPFVALLVSGGHSMLVKVDGIGRYEVLGESVDDAAGEAFDKTAKLMGLDYPGGPRLAKLAAKGLPAGYKFPRPMTDRPGLDFSFSGLKTFTANTIAAEPDDEQTRANIARAFEEAVVDTLAIKCRRALKQTGYNRLVIAGGVSANTRLRETLAEMMNSLGGQVFYPRGEFCTDNGAMIAFSGLQRLKAGQYEDLAVKGQPRWPLDTLPPVA.

The Fe cation site is built by His111 and His115. Substrate is bound by residues 134-138 (LVSGG), Asp167, Gly180, and Asn272. Residue Asp300 participates in Fe cation binding.

It belongs to the KAE1 / TsaD family. The cofactor is Fe(2+).

It localises to the cytoplasm. It carries out the reaction L-threonylcarbamoyladenylate + adenosine(37) in tRNA = N(6)-L-threonylcarbamoyladenosine(37) in tRNA + AMP + H(+). Its function is as follows. Required for the formation of a threonylcarbamoyl group on adenosine at position 37 (t(6)A37) in tRNAs that read codons beginning with adenine. Is involved in the transfer of the threonylcarbamoyl moiety of threonylcarbamoyl-AMP (TC-AMP) to the N6 group of A37, together with TsaE and TsaB. TsaD likely plays a direct catalytic role in this reaction. This is tRNA N6-adenosine threonylcarbamoyltransferase from Shewanella baltica (strain OS155 / ATCC BAA-1091).